The chain runs to 872 residues: Alanine--tRNA ligase (872 aa).

4 residues coordinate Zn(2+): H566, H570, C668, and H672.

It belongs to the class-II aminoacyl-tRNA synthetase family. Zn(2+) serves as cofactor.

The protein resides in the cytoplasm. It carries out the reaction tRNA(Ala) + L-alanine + ATP = L-alanyl-tRNA(Ala) + AMP + diphosphate. Functionally, catalyzes the attachment of alanine to tRNA(Ala) in a two-step reaction: alanine is first activated by ATP to form Ala-AMP and then transferred to the acceptor end of tRNA(Ala). Also edits incorrectly charged Ser-tRNA(Ala) and Gly-tRNA(Ala) via its editing domain. The polypeptide is Alanine--tRNA ligase (Lactococcus lactis subsp. lactis (strain IL1403) (Streptococcus lactis)).